A 102-amino-acid chain; its full sequence is Small ribosomal subunit protein bS18c (102 aa).

Residues 1–19 (MDKTKRPLRKSKRSFRRRL) are compositionally biased toward basic residues. The interval 1 to 26 (MDKTKRPLRKSKRSFRRRLPPPIGSG) is disordered.

It belongs to the bacterial ribosomal protein bS18 family. As to quaternary structure, part of the 30S ribosomal subunit.

It localises to the plastid. The protein localises to the chloroplast. In Piper cenocladum (Ant piper), this protein is Small ribosomal subunit protein bS18c.